Reading from the N-terminus, the 326-residue chain is Beta-ketoacyl-[acyl-carrier-protein] synthase III (326 aa).

Active-site residues include Cys-115 and His-253. Residues 254 to 258 are ACP-binding; that stretch reads QANKR. Asn-283 is an active-site residue.

Belongs to the thiolase-like superfamily. FabH family. Homodimer.

Its subcellular location is the cytoplasm. The enzyme catalyses malonyl-[ACP] + acetyl-CoA + H(+) = 3-oxobutanoyl-[ACP] + CO2 + CoA. It functions in the pathway lipid metabolism; fatty acid biosynthesis. In terms of biological role, catalyzes the condensation reaction of fatty acid synthesis by the addition to an acyl acceptor of two carbons from malonyl-ACP. Catalyzes the first condensation reaction which initiates fatty acid synthesis and may therefore play a role in governing the total rate of fatty acid production. Possesses both acetoacetyl-ACP synthase and acetyl transacylase activities. Its substrate specificity determines the biosynthesis of branched-chain and/or straight-chain of fatty acids. In Bradyrhizobium diazoefficiens (strain JCM 10833 / BCRC 13528 / IAM 13628 / NBRC 14792 / USDA 110), this protein is Beta-ketoacyl-[acyl-carrier-protein] synthase III.